We begin with the raw amino-acid sequence, 315 residues long: PIH1 domain-containing protein 2 (315 aa).

Belongs to the PIH1 family.

This chain is PIH1 domain-containing protein 2 (PIH1D2), found in Homo sapiens (Human).